Reading from the N-terminus, the 373-residue chain is Glutamate 5-kinase (373 aa).

An ATP-binding site is contributed by Lys-15. Residues Ser-56, Asp-143, and Asn-155 each coordinate substrate. Residue 175–176 (SD) participates in ATP binding. Residues 281–358 (KGTLTIDAGA…PDVMTILGIS (78 aa)) form the PUA domain.

Belongs to the glutamate 5-kinase family.

It is found in the cytoplasm. It catalyses the reaction L-glutamate + ATP = L-glutamyl 5-phosphate + ADP. The protein operates within amino-acid biosynthesis; L-proline biosynthesis; L-glutamate 5-semialdehyde from L-glutamate: step 1/2. Its function is as follows. Catalyzes the transfer of a phosphate group to glutamate to form L-glutamate 5-phosphate. This Bradyrhizobium diazoefficiens (strain JCM 10833 / BCRC 13528 / IAM 13628 / NBRC 14792 / USDA 110) protein is Glutamate 5-kinase.